We begin with the raw amino-acid sequence, 269 residues long: Pertussis toxin subunit 1 homolog (269 aa).

The signal sequence occupies residues 1 to 34; the sequence is MRCTRAIRQTARTGWLTWLAILAVTAPVTSPAWA.

It belongs to the bacterial exotoxin subunit A family.

This is Pertussis toxin subunit 1 homolog (ptxA) from Bordetella bronchiseptica (strain ATCC BAA-588 / NCTC 13252 / RB50) (Alcaligenes bronchisepticus).